A 67-amino-acid polypeptide reads, in one-letter code: Sec-independent protein translocase protein TatA (67 aa).

A helical membrane pass occupies residues 1 to 21 (MFGIGIQELLVVLVLVLLVFG). The interval 46–67 (PDEIDITPGKKNGKTDKDDKQA) is disordered. The segment covering 58–67 (GKTDKDDKQA) has biased composition (basic and acidic residues).

This sequence belongs to the TatA/E family. The Tat system comprises two distinct complexes: a TatABC complex, containing multiple copies of TatA, TatB and TatC subunits, and a separate TatA complex, containing only TatA subunits. Substrates initially bind to the TatABC complex, which probably triggers association of the separate TatA complex to form the active translocon.

It localises to the cell inner membrane. Functionally, part of the twin-arginine translocation (Tat) system that transports large folded proteins containing a characteristic twin-arginine motif in their signal peptide across membranes. TatA could form the protein-conducting channel of the Tat system. The polypeptide is Sec-independent protein translocase protein TatA (Nitratidesulfovibrio vulgaris (strain DSM 19637 / Miyazaki F) (Desulfovibrio vulgaris)).